A 595-amino-acid chain; its full sequence is Aspartate--tRNA(Asp/Asn) ligase (595 aa).

Glu-175 lines the L-aspartate pocket. The tract at residues 199 to 202 is aspartate; the sequence is QQYK. Positions 221 and 454 each coordinate L-aspartate. 221-223 contributes to the ATP binding site; it reads RDE. ATP is bound at residue Glu-488. Arg-495 lines the L-aspartate pocket. 540 to 543 serves as a coordination point for ATP; it reads GIDR.

The protein belongs to the class-II aminoacyl-tRNA synthetase family. Type 1 subfamily. As to quaternary structure, homodimer.

It localises to the cytoplasm. It catalyses the reaction tRNA(Asx) + L-aspartate + ATP = L-aspartyl-tRNA(Asx) + AMP + diphosphate. Its function is as follows. Aspartyl-tRNA synthetase with relaxed tRNA specificity since it is able to aspartylate not only its cognate tRNA(Asp) but also tRNA(Asn). Reaction proceeds in two steps: L-aspartate is first activated by ATP to form Asp-AMP and then transferred to the acceptor end of tRNA(Asp/Asn). The protein is Aspartate--tRNA(Asp/Asn) ligase of Brucella canis (strain ATCC 23365 / NCTC 10854 / RM-666).